The following is a 171-amino-acid chain: uncharacterized protein (171 aa).

This is an uncharacterized protein from Aedes vexans (Inland floodwater mosquito).